The following is a 124-amino-acid chain: Hydrogenase maturation factor HypA (124 aa).

Residue His2 coordinates Ni(2+). Residues Cys78, Cys81, Cys97, and Cys100 each coordinate Zn(2+).

It belongs to the HypA/HybF family.

Involved in the maturation of [NiFe] hydrogenases. Required for nickel insertion into the metal center of the hydrogenase. This is Hydrogenase maturation factor HypA from Methanocaldococcus jannaschii (strain ATCC 43067 / DSM 2661 / JAL-1 / JCM 10045 / NBRC 100440) (Methanococcus jannaschii).